The following is a 961-amino-acid chain: Glycine dehydrogenase (decarboxylating) (961 aa).

An N6-(pyridoxal phosphate)lysine modification is found at K702.

This sequence belongs to the GcvP family. In terms of assembly, the glycine cleavage system is composed of four proteins: P, T, L and H. Requires pyridoxal 5'-phosphate as cofactor.

It carries out the reaction N(6)-[(R)-lipoyl]-L-lysyl-[glycine-cleavage complex H protein] + glycine + H(+) = N(6)-[(R)-S(8)-aminomethyldihydrolipoyl]-L-lysyl-[glycine-cleavage complex H protein] + CO2. In terms of biological role, the glycine cleavage system catalyzes the degradation of glycine. The P protein binds the alpha-amino group of glycine through its pyridoxal phosphate cofactor; CO(2) is released and the remaining methylamine moiety is then transferred to the lipoamide cofactor of the H protein. This Rhodopseudomonas palustris (strain BisA53) protein is Glycine dehydrogenase (decarboxylating).